We begin with the raw amino-acid sequence, 181 residues long: Terminase small subunit (181 aa).

Positions 1-29 (MEVNKKQLADIFGASIRTIQNWQEQGMPV) are winged helix-turn-helix (wHTH). Residue 31-36 (RGGGKG) coordinates ATP. Residues 52 to 109 (ERDAEIENEKLRREVEELRQASEADLQPGTIEYERHRLTRAQADAQELKNARDSAEVV) adopt a coiled-coil conformation. The self-assembly stretch occupies residues 110 to 140 (ETAFCTFVLSRIAGEIASILDGLPLSVQRRF). The tract at residues 141–180 (PELENRHVDFLKRDIIKAMNKAAALDELIPGLLSEYIEQS) is binding to terminase large subunit.

It belongs to the terminase small subunit family. Homodimer. Heterotrimer of two small and one large terminase subunits. The catalytically competent terminase is composed of a tetramer of heterotrimers. The tetramer forms a ring structure large enough to encircle duplex DNA. Host IHFA/IHFB induces bending of viral DNA to facilitate the assembly of the terminase tetramer of heterotrimers. Interacts (via C-terminus) with the terminase large subunit (via N-terminus).

Its subcellular location is the host cytoplasm. It carries out the reaction ATP + H2O = ADP + phosphate + H(+). Functionally, the small subunit is responsible for the binding to multiple recognition elements within the packaging initiation site cos. The terminase lies at a unique vertex of the procapsid and is composed of two subunits, a small terminase subunit involved in viral DNA recognition (binding to packaging sequence cos), and a large terminase subunit possessing endonucleolytic and ATPase activities (DNA maturation and packaging). The terminase binds, cooperatively with the host factor IHFA/IHFB, to the cos site at the junction of adjacent viral genomes in the concatemeric DNA. The endonuclease activity of the large subunit cleave the viral DNA generating 5'overhangs of 12 bp in length. The terminase remains bound to the left end of the genome to be packaged, forming a stable DNA-terminase complex. In a reaction facilitated by the viral assembly catalyst gpFI, the DNA-terminase complex binds to the portal of the procapsid and the terminase packages the viral DNA into the procapsid until the next cos site on the concatemer reaches the complex ('unit length' packaging). The downstream cos site is then cut generating the mature right end of the genome, the heterotrimer undocks from the DNA-filled head and remains bound to the left end of concatemer's next genome. The polypeptide is Terminase small subunit (Nu1) (Escherichia phage lambda (Bacteriophage lambda)).